The chain runs to 265 residues: Aliphatic sulfonates import ATP-binding protein SsuB 1 (265 aa).

Positions 31-255 constitute an ABC transporter domain; that stretch reads FAFKGVEKRF…RRGSAELARL (225 aa). Residue 63–70 coordinates ATP; sequence GKSGCGKS.

It belongs to the ABC transporter superfamily. Aliphatic sulfonates importer (TC 3.A.1.17.2) family. In terms of assembly, the complex is composed of two ATP-binding proteins (SsuB), two transmembrane proteins (SsuC) and a solute-binding protein (SsuA).

It is found in the cell inner membrane. It carries out the reaction ATP + H2O + aliphatic sulfonate-[sulfonate-binding protein]Side 1 = ADP + phosphate + aliphatic sulfonateSide 2 + [sulfonate-binding protein]Side 1.. Its function is as follows. Part of the ABC transporter complex SsuABC involved in aliphatic sulfonates import. Responsible for energy coupling to the transport system. The sequence is that of Aliphatic sulfonates import ATP-binding protein SsuB 1 from Mesorhizobium japonicum (strain LMG 29417 / CECT 9101 / MAFF 303099) (Mesorhizobium loti (strain MAFF 303099)).